We begin with the raw amino-acid sequence, 148 residues long: Large ribosomal subunit protein bL9 (148 aa).

Belongs to the bacterial ribosomal protein bL9 family.

Functionally, binds to the 23S rRNA. This chain is Large ribosomal subunit protein bL9, found in Parafrankia sp. (strain EAN1pec).